The chain runs to 520 residues: Putative lipase ATG15 (520 aa).

Over 1 to 14 the chain is Cytoplasmic; the sequence is MLHKSPSRKRFASP. The helical; Signal-anchor for type II membrane protein transmembrane segment at 15 to 35 threads the bilayer; it reads LHLGCILTLTVLCLIAYYFAL. Residues 36–520 are Lumenal-facing; sequence PDYLSVGKSS…WLGFCTKYEL (485 aa). N-linked (GlcNAc...) asparagine glycosylation is found at asparagine 173, asparagine 202, and asparagine 208. Serine 332 acts as the Charge relay system in catalysis.

The protein belongs to the AB hydrolase superfamily. Lipase family. As to quaternary structure, binds to both phosphatidylinositol (PI) and phosphatidylinositol 3,5-bisphosphate (PIP2). Glycosylated.

The protein resides in the endosome. Its subcellular location is the multivesicular body membrane. It localises to the prevacuolar compartment membrane. It catalyses the reaction a triacylglycerol + H2O = a diacylglycerol + a fatty acid + H(+). Its function is as follows. Lipase which is essential for lysis of subvacuolar cytoplasm to vacuole targeted bodies and intravacuolar autophagic bodies. Involved in the lysis of intravacuolar multivesicular body (MVB) vesicles. The intravacuolar membrane disintegration by ATG15 is critical to life span extension. This chain is Putative lipase ATG15 (ATG15), found in Saccharomyces cerevisiae (strain ATCC 204508 / S288c) (Baker's yeast).